Reading from the N-terminus, the 311-residue chain is tRNA-cytidine(32) 2-sulfurtransferase (311 aa).

A PP-loop motif motif is present at residues 45–50; sequence SGGKDS. Cys120, Cys123, and Cys211 together coordinate [4Fe-4S] cluster.

It belongs to the TtcA family. As to quaternary structure, homodimer. Mg(2+) serves as cofactor. The cofactor is [4Fe-4S] cluster.

The protein resides in the cytoplasm. The enzyme catalyses cytidine(32) in tRNA + S-sulfanyl-L-cysteinyl-[cysteine desulfurase] + AH2 + ATP = 2-thiocytidine(32) in tRNA + L-cysteinyl-[cysteine desulfurase] + A + AMP + diphosphate + H(+). It participates in tRNA modification. Its function is as follows. Catalyzes the ATP-dependent 2-thiolation of cytidine in position 32 of tRNA, to form 2-thiocytidine (s(2)C32). The sulfur atoms are provided by the cysteine/cysteine desulfurase (IscS) system. This chain is tRNA-cytidine(32) 2-sulfurtransferase, found in Shewanella halifaxensis (strain HAW-EB4).